The sequence spans 284 residues: L-ribulose-5-phosphate 3-epimerase UlaE (284 aa).

Belongs to the L-ribulose-5-phosphate 3-epimerase family.

The enzyme catalyses L-ribulose 5-phosphate = L-xylulose 5-phosphate. Its pathway is cofactor degradation; L-ascorbate degradation; D-xylulose 5-phosphate from L-ascorbate: step 3/4. Functionally, catalyzes the isomerization of L-xylulose-5-phosphate to L-ribulose-5-phosphate. Is involved in the anaerobic L-ascorbate utilization. The sequence is that of L-ribulose-5-phosphate 3-epimerase UlaE from Salmonella choleraesuis (strain SC-B67).